Here is a 543-residue protein sequence, read N- to C-terminus: Aluminum-activated malate transporter 14 (543 aa).

The next 6 membrane-spanning stretches (helical) occupy residues Val-56 to Ile-76, Ala-80 to Cys-100, Gly-106 to Ser-126, Ile-129 to Leu-149, Leu-164 to Ile-184, and Phe-191 to Ile-211. The segment at Asp-416–Gly-438 is disordered. A compositionally biased stretch (polar residues) spans Glu-419–Thr-428. A coiled-coil region spans residues Arg-445–Ile-472.

It belongs to the aromatic acid exporter (TC 2.A.85) family.

The protein resides in the membrane. Its function is as follows. Malate transporter. In Arabidopsis thaliana (Mouse-ear cress), this protein is Aluminum-activated malate transporter 14 (ALMT14).